The following is a 1154-amino-acid chain: BEACH domain-containing protein lvsF (1154 aa).

Disordered regions lie at residues 92–123 and 139–167; these read HLPTPQPIPQSILSPSKPTPTPTPPIVVEQPS and TSKVTTPTPPTPTPTPPTPQPTSIAPTPT. The segment covering 145 to 158 has biased composition (pro residues); sequence PTPPTPTPTPPTPQ. Residues 289 to 384 enclose the BEACH-type PH domain; the sequence is DMNERNILEL…TRNQVYDLLV (96 aa). One can recognise a BEACH domain in the interval 389-697; that stretch reads TNIMHINEQA…QIFKTPHPQR (309 aa). Disordered stretches follow at residues 554-575, 739-762, and 779-825; these read SFESSSSSRNGGGGDDDDNFEN, NNLNNNNNNNNNNNSNSNSNLNNN, and NSLN…ENLN. 2 stretches are compositionally biased toward low complexity: residues 779 to 788 and 795 to 822; these read NSLNNENNEN and NSNSNSSDNIKNSNGFENNDNNFNNENE. 7 WD repeats span residues 858–897, 900–939, 942–980, 992–1031, 1034–1074, 1076–1110, and 1119–1154; these read LHKDKISALYLSNNSETIYSVSLDSCLKIYSLKEKRQIRS, LCNLALSSFQLSKDEKYIIIGSWDNNIYVYSVGNGSISYS, GHSDAVSCLKLHNNNILVSGSWDSSVKVWRTHRQSNGAI, DSDTEIRSIDISSNGTIFCAGSSDGYLYFYDLLTLQLIRR, CFFD…FSFK, KGEIHCLDSDGSSLIIGTDRGLCLWSLTTGTEIKD, and SSNESIHSLNVSINQSSNKPILLTGTEAGSISIWQQ.

This is BEACH domain-containing protein lvsF (lvsF) from Dictyostelium discoideum (Social amoeba).